The primary structure comprises 450 residues: Chromosomal replication initiator protein DnaA (450 aa).

The tract at residues 1 to 71 (MEDVWLQAQS…SVRSLTDSHF (71 aa)) is domain I, interacts with DnaA modulators. Positions 71-113 (FQVELQVAARQQEKTAKSPRKSHTEDELGPVESEKCAPAEFST) are domain II. Residues 82–103 (QEKTAKSPRKSHTEDELGPVES) form a disordered region. Positions 114 to 330 (NLNAKYTFDT…GMLIRLGAVA (217 aa)) are domain III, AAA+ region. 4 residues coordinate ATP: glycine 158, glycine 160, lysine 161, and threonine 162. The domain IV, binds dsDNA stretch occupies residues 331-450 (SLTGKNITLD…IETLRKGLLN (120 aa)).

The protein belongs to the DnaA family. In terms of assembly, oligomerizes as a right-handed, spiral filament on DNA at oriC.

The protein resides in the cytoplasm. In terms of biological role, plays an essential role in the initiation and regulation of chromosomal replication. ATP-DnaA binds to the origin of replication (oriC) to initiate formation of the DNA replication initiation complex once per cell cycle. Binds the DnaA box (a 9 base pair repeat at the origin) and separates the double-stranded (ds)DNA. Forms a right-handed helical filament on oriC DNA; dsDNA binds to the exterior of the filament while single-stranded (ss)DNA is stabiized in the filament's interior. The ATP-DnaA-oriC complex binds and stabilizes one strand of the AT-rich DNA unwinding element (DUE), permitting loading of DNA polymerase. After initiation quickly degrades to an ADP-DnaA complex that is not apt for DNA replication. Binds acidic phospholipids. This is Chromosomal replication initiator protein DnaA from Geobacter metallireducens (strain ATCC 53774 / DSM 7210 / GS-15).